Here is a 266-residue protein sequence, read N- to C-terminus: Biotin--[acetyl-CoA-carboxylase] ligase (266 aa).

One can recognise a BPL/LPL catalytic domain in the interval 14 to 202 (RSLRDQLIGA…ELEARIIQWR (189 aa)). Residues 38–39 (ST), Gln63, Arg67, and Lys138 contribute to the biotin site.

It belongs to the biotin--protein ligase family. As to quaternary structure, monomer in solution. Forms dimers under specific crystallization conditions.

It carries out the reaction biotin + L-lysyl-[protein] + ATP = N(6)-biotinyl-L-lysyl-[protein] + AMP + diphosphate + H(+). It catalyses the reaction biotin + ATP + H(+) = biotinyl-5'-AMP + diphosphate. The catalysed reaction is biotinyl-5'-AMP + L-lysyl-[protein] = N(6)-biotinyl-L-lysyl-[protein] + AMP + 2 H(+). With respect to regulation, binding of biotin and ATP significantly increases the thermal stability of BirA and leads to the formation of a high affinity holoenzyme complex. In terms of biological role, catalyzes the transfer of biotin onto a conserved lysine residue of the biotin carboxyl carrier protein (BCCP) domain of acetyl-CoA carboxylase and converts it to active holo-BCCP. Forms an acyl-adenylate intermediate. Cannot use GTP or desthiobiotin. The polypeptide is Biotin--[acetyl-CoA-carboxylase] ligase (Mycobacterium tuberculosis (strain ATCC 25618 / H37Rv)).